Here is a 431-residue protein sequence, read N- to C-terminus: 3-phosphoshikimate 1-carboxyvinyltransferase (431 aa).

Residues Lys21, Ser22, and Arg26 each coordinate 3-phosphoshikimate. Lys21 is a binding site for phosphoenolpyruvate. Residues Gly93 and Arg122 each coordinate phosphoenolpyruvate. Residues Ser167, Gln169, Asp318, and Lys345 each contribute to the 3-phosphoshikimate site. Gln169 contributes to the phosphoenolpyruvate binding site. Asp318 serves as the catalytic Proton acceptor. Phosphoenolpyruvate-binding residues include Arg349 and Arg391.

Belongs to the EPSP synthase family. As to quaternary structure, monomer.

The protein resides in the cytoplasm. It catalyses the reaction 3-phosphoshikimate + phosphoenolpyruvate = 5-O-(1-carboxyvinyl)-3-phosphoshikimate + phosphate. The protein operates within metabolic intermediate biosynthesis; chorismate biosynthesis; chorismate from D-erythrose 4-phosphate and phosphoenolpyruvate: step 6/7. Catalyzes the transfer of the enolpyruvyl moiety of phosphoenolpyruvate (PEP) to the 5-hydroxyl of shikimate-3-phosphate (S3P) to produce enolpyruvyl shikimate-3-phosphate and inorganic phosphate. This is 3-phosphoshikimate 1-carboxyvinyltransferase from Roseiflexus castenholzii (strain DSM 13941 / HLO8).